The sequence spans 700 residues: ABC transporter B family member 26, chloroplastic (700 aa).

Residues 1–59 constitute a chloroplast transit peptide; sequence MAQQVLGCTSRPIRVSLHRCSVITTSDTIRRKNLRFVRNPRLSFSLQSSTRNYRLPSIN. 3 helical membrane-spanning segments follow: residues 137 to 157, 182 to 202, and 268 to 288; these read WVIF…ITIP, LVTL…FFGI, and LIYL…ICCI. The ABC transmembrane type-1 domain occupies 139-421; that stretch reads IFAAFSTLIV…VGDNLSSLMQ (283 aa). Residues 455 to 694 form the ABC transporter domain; sequence IEFVDVSFSY…DGLYARLTKR (240 aa). An ATP-binding site is contributed by 490 to 497; the sequence is GLSGSGKS.

It belongs to the ABC transporter superfamily. ABCB family. Multidrug resistance exporter (TC 3.A.1.201) subfamily.

It is found in the plastid. The protein localises to the chloroplast membrane. This chain is ABC transporter B family member 26, chloroplastic (ABCB26), found in Arabidopsis thaliana (Mouse-ear cress).